Reading from the N-terminus, the 127-residue chain is Small ribosomal subunit protein uS13 (127 aa).

The interval 97–127 (PVRGQRTKTNARTRKGPRKTVAGKKGVKDLR) is disordered. The segment covering 101–118 (QRTKTNARTRKGPRKTVA) has biased composition (basic residues).

This sequence belongs to the universal ribosomal protein uS13 family. Part of the 30S ribosomal subunit. Forms a loose heterodimer with protein S19. Forms two bridges to the 50S subunit in the 70S ribosome.

Its function is as follows. Located at the top of the head of the 30S subunit, it contacts several helices of the 16S rRNA. In the 70S ribosome it contacts the 23S rRNA (bridge B1a) and protein L5 of the 50S subunit (bridge B1b), connecting the 2 subunits; these bridges are implicated in subunit movement. Contacts the tRNAs in the A and P-sites. This is Small ribosomal subunit protein uS13 from Rhodopirellula baltica (strain DSM 10527 / NCIMB 13988 / SH1).